A 93-amino-acid chain; its full sequence is Small ribosomal subunit protein uS19 (93 aa).

This sequence belongs to the universal ribosomal protein uS19 family.

Protein S19 forms a complex with S13 that binds strongly to the 16S ribosomal RNA. This Latilactobacillus sakei subsp. sakei (strain 23K) (Lactobacillus sakei subsp. sakei) protein is Small ribosomal subunit protein uS19.